Consider the following 211-residue polypeptide: Metalloproteinase inhibitor 3 (211 aa).

A signal peptide spans 1-23 (MTPWLGLVVLLSCWSLGHWGTEA). Cys-24 contributes to the Zn(2+) binding site. 2 involved in metalloproteinase-binding regions span residues 24-27 (CTCS) and 88-89 (ES). Disulfide bonds link Cys-24-Cys-91, Cys-26-Cys-118, Cys-36-Cys-143, Cys-145-Cys-192, Cys-150-Cys-155, and Cys-163-Cys-184. The region spanning 24–143 (CTCSPSHPQD…GLNYRYHLGC (120 aa)) is the NTR domain. Residues 105–188 (TGRVYEGKMY…SKHYACIRQK (84 aa)) are mediates interaction with EFEMP1.

This sequence belongs to the protease inhibitor I35 (TIMP) family. As to quaternary structure, interacts with EFEMP1. Interacts with KDR.

It localises to the secreted. The protein localises to the extracellular space. It is found in the extracellular matrix. Functionally, mediates a variety of processes including matrix regulation and turnover, inflammation, and angiogenesis, through reversible inhibition of zinc protease superfamily enzymes, primarily matrix metalloproteinases (MMPs). Regulates extracellular matrix (ECM) remodeling through inhibition of matrix metalloproteinases (MMP) including MMP-1, MMP-2, MMP-3, MMP-7, MMP-9, MMP-13, MMP-14 and MMP-15. Additionally, modulates the processing of amyloid precursor protein (APP) and apolipoprotein E receptor ApoER2 by inhibiting two alpha-secretases ADAM10 and ADAM17. Functions as a tumor suppressor and a potent inhibitor of angiogenesis. Exerts its anti-angiogenic effect by directly interacting with vascular endothelial growth factor (VEGF) receptor-2/KDR, preventing its binding to the VEGFA ligand. Selectively induces apoptosis in angiogenic endothelial cells through a caspase-independent cell death pathway. Mechanistically, inhibits matrix-induced focal adhesion kinase PTK2 tyrosine phosphorylation and association with paxillin/PXN and disrupts the incorporation of ITGB3, PTK2 and PXN into focal adhesion contacts on the matrix. This Rattus norvegicus (Rat) protein is Metalloproteinase inhibitor 3 (Timp3).